The primary structure comprises 248 residues: MIYLKSANEVAGIKKACAIFKAVKAYFTIEKLLGKKLVTIDRLIKQFIEQKQAKCAFHGYLGFPGFNCLSLNQTVIHGVADQTVFKDSDKLTLDIGIDYHGYLCDAAFTLLGNKADPKAVKLLNDVEQAFSKVIEPELFVNNPIGNLSNAIQTYFENKGYFLVKEFGGHGCGIKIHEDPLILNWGEKNQGVRLQEGMVICIEPMVMTDSSEITMAANNWNVLTLKSKFNCHVEQMYHITNNGFECLTN.

Residue His-77 coordinates substrate. Asp-94, Asp-105, and His-169 together coordinate a divalent metal cation. His-176 contacts substrate. 2 residues coordinate a divalent metal cation: Glu-202 and Glu-233.

This sequence belongs to the peptidase M24A family. Methionine aminopeptidase type 1 subfamily. As to quaternary structure, monomer. Co(2+) is required as a cofactor. Requires Zn(2+) as cofactor. Mn(2+) serves as cofactor. It depends on Fe(2+) as a cofactor.

The enzyme catalyses Release of N-terminal amino acids, preferentially methionine, from peptides and arylamides.. Removes the N-terminal methionine from nascent proteins. The N-terminal methionine is often cleaved when the second residue in the primary sequence is small and uncharged (Met-Ala-, Cys, Gly, Pro, Ser, Thr, or Val). Requires deformylation of the N(alpha)-formylated initiator methionine before it can be hydrolyzed. The polypeptide is Methionine aminopeptidase (Mycoplasma genitalium (strain ATCC 33530 / DSM 19775 / NCTC 10195 / G37) (Mycoplasmoides genitalium)).